A 414-amino-acid chain; its full sequence is Lysosome-associated membrane glycoprotein 1 (414 aa).

An N-terminal signal peptide occupies residues Met-1–Ser-18. Positions Phe-19–Asp-181 are first lumenal domain. Residues Phe-19 to Met-379 are Lumenal-facing. Residues Cys-29 and Cys-67 are joined by a disulfide bond. Residues Asn-33, Asn-58, Asn-71, Asn-90, Asn-108, Asn-117, Asn-154, Asn-159, Asn-168, and Asn-174 are each glycosylated (N-linked (GlcNAc...) asparagine). Cys-142 and Cys-178 are oxidised to a cystine. The segment at Met-182 to Ala-224 is hinge. The interval Thr-186–Ser-213 is disordered. Low complexity predominate over residues Ala-196–Ser-213. N-linked (GlcNAc...) asparagine glycans are attached at residues Asn-220, Asn-225, Asn-238, Asn-259, Asn-289, Asn-301, and Asn-319. Residues Asn-225–Met-379 form a second lumenal domain region. A disulfide bridge connects residues Cys-228 and Cys-266. Cys-335 and Cys-372 are joined by a disulfide. A helical transmembrane segment spans residues Leu-380 to Gly-403. The Cytoplasmic portion of the chain corresponds to Arg-404 to Ile-414.

Belongs to the LAMP family.

It is found in the lysosome membrane. The protein localises to the endosome membrane. Its subcellular location is the late endosome membrane. The protein resides in the cell membrane. It localises to the cytolytic granule membrane. Its function is as follows. Lysosomal membrane glycoprotein which plays an important role in lysosome biogenesis, lysosomal pH regulation, autophagy and cholesterol homeostasis. In terms of biological role, (Microbial infection) Plays an essential role in efficient replication and spread of Marek's disease virus, by facilitating viral cell-to-cell spread. The chain is Lysosome-associated membrane glycoprotein 1 (LAMP1) from Gallus gallus (Chicken).